The following is a 193-amino-acid chain: AP-3 complex subunit sigma-2 (193 aa).

The protein belongs to the adaptor complexes small subunit family. Adaptor protein complex 3 (AP-3) is a heterotetramer composed of two large adaptins (delta-type subunit AP3D1 and beta-type subunit AP3B1 or AP3B2), a medium adaptin (mu-type subunit AP3M1 or AP3M2) and a small adaptin (sigma-type subunit APS1 or AP3S2). Interacts with AGAP1. AP-3 associates with the BLOC-1 complex.

The protein resides in the golgi apparatus. It localises to the cytoplasmic vesicle membrane. Its function is as follows. Part of the AP-3 complex, an adaptor-related complex which is not clathrin-associated. The complex is associated with the Golgi region as well as more peripheral structures. It facilitates the budding of vesicles from the Golgi membrane and may be directly involved in trafficking to lysosomes. In concert with the BLOC-1 complex, AP-3 is required to target cargos into vesicles assembled at cell bodies for delivery into neurites and nerve terminals. The protein is AP-3 complex subunit sigma-2 (AP3S2) of Bos taurus (Bovine).